The primary structure comprises 570 residues: Probable metalloreductase AIM14 (570 aa).

A run of 7 helical transmembrane segments spans residues 21-41 (IKYG…LALL), 70-90 (AIHL…HYSL), 101-118 (LGRL…LTLR), 142-162 (IITV…AIDD), 177-197 (FVGF…IGPM), 204-224 (LFYI…PIHS), and 230-250 (FPFL…RIVF). Residues 101–219 (LGRLSYALIP…NLVNVAFILL (119 aa)) form the Ferric oxidoreductase domain. Residues 250–388 (FAKSLMILNK…GGSGISFALP (139 aa)) form the FAD-binding FR-type domain. The disordered stretch occupies residues 480–507 (ISNFNSENADSNDKTPETSHSPTKENGS).

The protein belongs to the ferric reductase (FRE) family. AIM14 subfamily. In terms of assembly, interacts with ribosomes.

Its subcellular location is the membrane. Probable cell surface metalloreductase. May be involved in iron or copper homeostasis. The chain is Probable metalloreductase AIM14 (AIM14) from Saccharomyces cerevisiae (strain JAY291) (Baker's yeast).